The chain runs to 148 residues: Transcriptional regulator MraZ (148 aa).

SpoVT-AbrB domains are found at residues 5–51 (STQL…PQPV) and 80–123 (ACDV…DMAK).

Belongs to the MraZ family. Forms oligomers.

The protein resides in the cytoplasm. It localises to the nucleoid. The protein is Transcriptional regulator MraZ of Nitrosomonas eutropha (strain DSM 101675 / C91 / Nm57).